The chain runs to 602 residues: Pro-neuregulin-1, membrane-bound isoform (602 aa).

The Extracellular segment spans residues 1–206 (MWATSEGPLQ…MEAEELYQKR (206 aa)). The N-linked (GlcNAc...) asparagine glycan is linked to N21. An Ig-like C2-type domain is found at 29-123 (PKLKEMKNQE…DSTKASVIIT (95 aa)). Cysteines 49 and 105 form a disulfide. 2 N-linked (GlcNAc...) asparagine glycosylation sites follow: N113 and N126. Positions 137-181 (HLTKCDIKQKAFCVNGGECYMVKDLPNPPRYLCRCPNEFTGDRCQ) constitute an EGF-like domain. 3 disulfide bridges follow: C141-C155, C149-C169, and C171-C180. A helical transmembrane segment spans residues 207 to 229 (VLTITGICIALLVVGIMCVVAYC). The Cytoplasmic portion of the chain corresponds to 230–602 (KTKKQRKKLH…VIANQDPIAV (373 aa)). Disordered stretches follow at residues 293–366 (ETSF…EGNS), 391–421 (MTTP…PVSS), 460–479 (FNSF…PSPL), and 486–553 (EYET…FLSI). Positions 294–314 (TSFSTSHYTSTTHHSMTVTQT) are enriched in low complexity. Residues 315 to 324 (PSHSWSNGHT) show a composition bias toward polar residues. Residues 325–341 (ESILSESHSVLVSSSVE) show a composition bias toward low complexity. The segment covering 460 to 474 (FNSFHNNPTHESNSL) has biased composition (polar residues). Positions 504-514 (TNSRRVKRTKP) are enriched in basic residues. Positions 527–536 (DTSSQSTSSE) are enriched in low complexity.

It belongs to the neuregulin family. Proteolytic cleavage close to the plasma membrane on the external face leads to the release of the soluble growth factor form. Post-translationally, extensive glycosylation precedes the proteolytic cleavage.

The protein localises to the cell membrane. The protein resides in the secreted. In terms of biological role, direct ligand for the ERBB tyrosine kinase receptors. The multiple isoforms perform diverse functions: cysteine-rich domain containing isoforms (isoform 2-isoform 4) probably regulate the expression of nicotinic acetylcholine receptors at developing interneuronal synapses. Isoform Ig-NRG is required for the initial induction and/or maintenance of the mature levels of acetylcholine receptors at neuromuscular synapses. Binds to ERBB3 and integrins to form a complex which is essential for NRG1-ERBB signaling. The sequence is that of Pro-neuregulin-1, membrane-bound isoform (NRG1) from Gallus gallus (Chicken).